A 467-amino-acid chain; its full sequence is Retinoic acid receptor RXR-gamma (467 aa).

Residues 1–142 form a modulating region; that stretch reads MYGNYPHFIK…TSPGSLAKHI (142 aa). 2 NR C4-type zinc fingers span residues 143-163 and 179-203; these read CAIC…CEGC and CRDN…YQKC. A DNA-binding region (nuclear receptor) is located at residues 143-208; the sequence is CAICGDRSSG…RYQKCLAMGM (66 aa). A hinge region spans residues 209-232; sequence KREAVQEERQGSRERSENEAESTS. A compositionally biased stretch (basic and acidic residues) spans 214–226; that stretch reads QEERQGSRERSEN. Positions 214 to 237 are disordered; the sequence is QEERQGSRERSENEAESTSGGSED. The NR LBD domain occupies 235–463; it reads SEDMPVERIL…TFLMEMLETP (229 aa).

This sequence belongs to the nuclear hormone receptor family. NR2 subfamily. In terms of assembly, homodimer. Heterodimer; with a RAR molecule. Binds DNA preferentially as a RAR/RXR heterodimer. Isoform 1 is highly expressed inliver. Isoform 2 is abundantly expressed in eye and dorsal root ganglia.

Its subcellular location is the nucleus. Functionally, receptor for retinoic acid. Retinoic acid receptors bind as heterodimers to their target response elements in response to their ligands, all-trans or 9-cis retinoic acid, and regulate gene expression in various biological processes. The RAR/RXR heterodimers bind to the retinoic acid response elements (RARE) composed of tandem 5'-AGGTCA-3' sites known as DR1-DR5. The high affinity ligand for RXRs is 9-cis retinoic acid. This Gallus gallus (Chicken) protein is Retinoic acid receptor RXR-gamma (RXRG).